Reading from the N-terminus, the 206-residue chain is Small ribosomal subunit protein uS4 (206 aa).

Residues 96–156 (GRLDNVVYRM…EKAKNQLRVK (61 aa)) form the S4 RNA-binding domain.

This sequence belongs to the universal ribosomal protein uS4 family. Part of the 30S ribosomal subunit. Contacts protein S5. The interaction surface between S4 and S5 is involved in control of translational fidelity.

One of the primary rRNA binding proteins, it binds directly to 16S rRNA where it nucleates assembly of the body of the 30S subunit. Functionally, with S5 and S12 plays an important role in translational accuracy. This chain is Small ribosomal subunit protein uS4, found in Marinobacter nauticus (strain ATCC 700491 / DSM 11845 / VT8) (Marinobacter aquaeolei).